The sequence spans 78 residues: Omega-conotoxin-like ArMKLT1-011 (78 aa).

A signal peptide spans 1–22 (MKLTCMMIVAVLFLTAWTSVTA). A propeptide spanning residues 23–48 (VNTRGELENLFLRASHEMNSEASKLD) is cleaved from the precursor. 3 disulfides stabilise this stretch: Cys-52–Cys-69, Cys-59–Cys-73, and Cys-68–Cys-77.

It belongs to the conotoxin O1 superfamily. In terms of tissue distribution, expressed by the venom duct.

The protein localises to the secreted. Functionally, omega-conotoxins act at presynaptic membranes, they bind and block voltage-gated calcium channels (Cav). In Conus arenatus (Sand-dusted cone), this protein is Omega-conotoxin-like ArMKLT1-011.